The following is a 501-amino-acid chain: Adenylosuccinate synthetase 2, chloroplastic (501 aa).

Residues glycine 87–lysine 93 and glycine 115–threonine 117 contribute to the GTP site. Aspartate 88 functions as the Proton acceptor in the catalytic mechanism. Mg(2+)-binding residues include aspartate 88 and glycine 115. IMP-binding positions include aspartate 88 to lysine 91, asparagine 113 to histidine 116, threonine 205, arginine 219, glutamine 300, threonine 315, and arginine 379. Residue histidine 116 is the Proton donor of the active site. Asparagine 375–arginine 381 contacts substrate. GTP-binding positions include arginine 381, lysine 407–aspartate 409, and glycine 490–glycine 492.

Belongs to the adenylosuccinate synthetase family. As to quaternary structure, homodimer. The cofactor is Mg(2+).

The protein resides in the plastid. The protein localises to the chloroplast. The enzyme catalyses IMP + L-aspartate + GTP = N(6)-(1,2-dicarboxyethyl)-AMP + GDP + phosphate + 2 H(+). Its pathway is purine metabolism; AMP biosynthesis via de novo pathway; AMP from IMP: step 1/2. Its function is as follows. Plays an important role in the de novo pathway and in the salvage pathway of purine nucleotide biosynthesis. Catalyzes the first committed step in the biosynthesis of AMP from IMP. The sequence is that of Adenylosuccinate synthetase 2, chloroplastic from Capsicum frutescens (Cayenne pepper).